The following is a 399-amino-acid chain: Ubiquitin-like modifier-activating enzyme 5 (399 aa).

ATP contacts are provided by glycine 76, aspartate 97, lysine 120, asparagine 143, and asparagine 177. Zn(2+) is bound by residues cysteine 219 and cysteine 222. The active-site Glycyl thioester intermediate is the cysteine 243. Positions 296 and 301 each coordinate Zn(2+).

Belongs to the ubiquitin-activating E1 family. UBA5 subfamily.

Its function is as follows. E1-like enzyme which activates UFM1. The polypeptide is Ubiquitin-like modifier-activating enzyme 5 (Drosophila mojavensis (Fruit fly)).